The chain runs to 34 residues: Chlorotoxin-like peptide AaCtx (34 aa).

Cystine bridges form between Cys-2-Cys-19, Cys-5-Cys-27, Cys-16-Cys-32, and Cys-20-Cys-34.

Belongs to the short scorpion toxin superfamily. Chloride channel inhibitor family. Expressed by the venom gland.

The protein resides in the secreted. Its function is as follows. Toxin with unknown function in healthy organisms. On glioma cells, interacts with chloride channels (probably ClC-3/CLCN3) and MMP2 at the surface of glioma cells. This complex is then internalized via caveolae, thus inhibiting the chloride channels necessary for cell shrinkage and tumor propagation. Inhibits migration and invasion of U87 glioma cells expressing CLCN3/ClC-3 voltage-gated chloride channels. The chain is Chlorotoxin-like peptide AaCtx from Androctonus australis (Sahara scorpion).